Here is a 247-residue protein sequence, read N- to C-terminus: UPF0280 protein MmarC6_1437 (247 aa).

It belongs to the UPF0280 family.

In Methanococcus maripaludis (strain C6 / ATCC BAA-1332), this protein is UPF0280 protein MmarC6_1437.